The primary structure comprises 130 residues: Large ribosomal subunit protein bL12c (130 aa).

This sequence belongs to the bacterial ribosomal protein bL12 family. As to quaternary structure, homodimer. Part of the ribosomal stalk of the 50S ribosomal subunit. Forms a multimeric L10(L12)X complex, where L10 forms an elongated spine to which 2 to 4 L12 dimers bind in a sequential fashion. Binds GTP-bound translation factors.

It localises to the plastid. The protein resides in the chloroplast. In terms of biological role, forms part of the ribosomal stalk which helps the ribosome interact with GTP-bound translation factors. Is thus essential for accurate translation. The polypeptide is Large ribosomal subunit protein bL12c (Cyanidium caldarium (Red alga)).